The chain runs to 64 residues: Large ribosomal subunit protein bL35 (64 aa).

It belongs to the bacterial ribosomal protein bL35 family.

This chain is Large ribosomal subunit protein bL35, found in Acinetobacter baumannii (strain AB307-0294).